Consider the following 930-residue polypeptide: Serine/threonine-protein kinase PknD (930 aa).

One can recognise a Protein kinase domain in the interval 4–291; that stretch reads YDIIRMIGKG…ALKADIEQHL (288 aa). Residues 10–18 and Lys33 each bind ATP; that span reads IGKGGMGEV. The active-site Proton acceptor is the Asp138.

This sequence belongs to the protein kinase superfamily. Ser/Thr protein kinase family. Post-translationally, autophosphorylated on serine and threonine residues.

The catalysed reaction is L-seryl-[protein] + ATP = O-phospho-L-seryl-[protein] + ADP + H(+). It catalyses the reaction L-threonyl-[protein] + ATP = O-phospho-L-threonyl-[protein] + ADP + H(+). Functionally, together with the serine/threonine kinase Pkn1, may play a role in the specific interactions with host proteins during intracellular growth. The polypeptide is Serine/threonine-protein kinase PknD (Chlamydia caviae (strain ATCC VR-813 / DSM 19441 / 03DC25 / GPIC) (Chlamydophila caviae)).